We begin with the raw amino-acid sequence, 284 residues long: uncharacterized protein (284 aa).

The N-terminal stretch at 1 to 21 (MKTTMLMLVLLVCSYIHYVCA) is a signal peptide. 3 consecutive transmembrane segments (helical) span residues 88-108 (AGPF…FLWA), 144-164 (ALGV…LGVW), and 212-232 (VFTT…SPTY).

It is found in the membrane. This is an uncharacterized protein from Schizosaccharomyces pombe (strain 972 / ATCC 24843) (Fission yeast).